Here is a 797-residue protein sequence, read N- to C-terminus: MAHRCLRLWGRGGCWPRGLQQLLVPGGVGPGEQPCLRTLYRFVTTQARASRNSLLTDIIAAYQRFCSRPPKGFEKYFPNGKNGKKASEPKEVMGEKKESKPAATTRSSGGGGGGGGKRGGKKDDSHWWSRFQKGDIPWDDKDFRMFFLWTALFWGGVMFYLLLKRSGREITWKDFVNNYLSKGVVDRLEVVNKRFVRVTFTPGKTPVDGQYVWFNIGSVDTFERNLETLQQELGIEGENRVPVVYIAESDGSFLLSMLPTVLIIAFLLYTIRRGPAGIGRTGRGMGGLFSVGETTAKVLKDEIDVKFKDVAGCEEAKLEIMEFVNFLKNPKQYQDLGAKIPKGAILTGPPGTGKTLLAKATAGEANVPFITVSGSEFLEMFVGVGPARVRDLFALARKNAPCILFIDEIDAVGRKRGRGNFGGQSEQENTLNQLLVEMDGFNTTTNVVILAGTNRPDILDPALLRPGRFDRQIFIGPPDIKGRASIFKVHLRPLKLDSTLEKDKLARKLASLTPGFSGADVANVCNEAALIAARHLSDSINQKHFEQAIERVIGGLEKKTQVLQPEEKKTVAYHEAGHAVAGWYLEHADPLLKVSIIPRGKGLGYAQYLPKEQYLYTKEQLLDRMCMTLGGRVSEEIFFGRITTGAQDDLRKVTQSAYAQIVQFGMNEKVGQISFDLPRQGDMVLEKPYSEATARLIDDEVRILINDAYKRTVALLTEKKADVEKVALLLLEKEVLDKNDMVELLGPRPFAEKSTYEEFVEGTGSLDEDTSLPEGLKDWNKEREKEKEEPPGEKVAN.

Residues 1-38 (MAHRCLRLWGRGGCWPRGLQQLLVPGGVGPGEQPCLRT) constitute a mitochondrion transit peptide. Residues 39 to 66 (LYRFVTTQARASRNSLLTDIIAAYQRFC) constitute a propeptide, removed in mature form. The Mitochondrial matrix portion of the chain corresponds to 39–142 (LYRFVTTQAR…KGDIPWDDKD (104 aa)). Positions 76–126 (YFPNGKNGKKASEPKEVMGEKKESKPAATTRSSGGGGGGGGKRGGKKDDSH) are disordered. Residues 85–100 (KASEPKEVMGEKKESK) are compositionally biased toward basic and acidic residues. Over residues 108-117 (SGGGGGGGGK) the composition is skewed to gly residues. At Lys117 the chain carries N6-succinyllysine. A helical membrane pass occupies residues 143-163 (FRMFFLWTALFWGGVMFYLLL). Residues 164–250 (KRSGREITWK…VPVVYIAESD (87 aa)) lie on the Mitochondrial intermembrane side of the membrane. The helical transmembrane segment at 251–271 (GSFLLSMLPTVLIIAFLLYTI) threads the bilayer. The Mitochondrial matrix segment spans residues 272–797 (RRGPAGIGRT…EEPPGEKVAN (526 aa)). ATP is bound by residues Val310, Ala311, Thr352, Gly353, Lys354, Thr355, Leu356, and His490. His574 is a binding site for Zn(2+). Residue Glu575 is part of the active site. 2 residues coordinate Zn(2+): His578 and Asp649. Residues 759–797 (FVEGTGSLDEDTSLPEGLKDWNKEREKEKEEPPGEKVAN) form a disordered region. The span at 775–797 (GLKDWNKEREKEKEEPPGEKVAN) shows a compositional bias: basic and acidic residues.

The protein in the N-terminal section; belongs to the AAA ATPase family. It in the C-terminal section; belongs to the peptidase M41 family. Homohexamer. Forms heterohexamers with SPG7. The m-AAA protease is either composed of homohexamers of AFG3L2 or heterohexamers of AFG3L2 and SPG7. Interacts with MAIP1. Interacts with DNAJC19. Interacts with PHB2. Requires Zn(2+) as cofactor. In terms of processing, upon import into the mitochondrion, the N-terminal transit peptide is cleaved to generate an intermediate form which undergoes autocatalytic proteolytic processing to generate the proteolytically active mature form. In terms of tissue distribution, ubiquitous. Highly expressed in the cerebellar Purkinje cells.

The protein resides in the mitochondrion inner membrane. The enzyme catalyses ATP + H2O = ADP + phosphate + H(+). Catalytic component of the m-AAA protease, a protease that plays a key role in proteostasis of inner mitochondrial membrane proteins, and which is essential for axonal and neuron development. AFG3L2 possesses both ATPase and protease activities: the ATPase activity is required to unfold substrates, threading them into the internal proteolytic cavity for hydrolysis into small peptide fragments. The m-AAA protease carries out quality control in the inner membrane of the mitochondria by mediating degradation of mistranslated or misfolded polypeptides. The m-AAA protease complex also promotes the processing and maturation of mitochondrial proteins, such as MRPL32/bL32m, PINK1 and SP7. Mediates protein maturation of the mitochondrial ribosomal subunit MRPL32/bL32m by catalyzing the cleavage of the presequence of MRPL32/bL32m prior to assembly into the mitochondrial ribosome. Required for SPG7 maturation into its active mature form after SPG7 cleavage by mitochondrial-processing peptidase (MPP). Required for the maturation of PINK1 into its 52kDa mature form after its cleavage by mitochondrial-processing peptidase (MPP). Acts as a regulator of calcium in neurons by mediating degradation of SMDT1/EMRE before its assembly with the uniporter complex, limiting the availability of SMDT1/EMRE for MCU assembly and promoting efficient assembly of gatekeeper subunits with MCU. Promotes the proteolytic degradation of GHITM upon hyperpolarization of mitochondria: progressive GHITM degradation leads to respiratory complex I degradation and broad reshaping of the mitochondrial proteome by AFG3L2. Also acts as a regulator of mitochondrial glutathione homeostasis by mediating cleavage and degradation of SLC25A39. SLC25A39 cleavage is prevented when SLC25A39 binds iron-sulfur. Involved in the regulation of OMA1-dependent processing of OPA1. May act by mediating processing of OMA1 precursor, participating in OMA1 maturation. This chain is Mitochondrial inner membrane m-AAA protease component AFG3L2, found in Homo sapiens (Human).